We begin with the raw amino-acid sequence, 222 residues long: Methylthioribulose-1-phosphate dehydratase (222 aa).

2 residues coordinate Zn(2+): H94 and H96.

The protein belongs to the aldolase class II family. MtnB subfamily. The cofactor is Zn(2+).

It carries out the reaction 5-(methylsulfanyl)-D-ribulose 1-phosphate = 5-methylsulfanyl-2,3-dioxopentyl phosphate + H2O. It participates in amino-acid biosynthesis; L-methionine biosynthesis via salvage pathway; L-methionine from S-methyl-5-thio-alpha-D-ribose 1-phosphate: step 2/6. In terms of biological role, catalyzes the dehydration of methylthioribulose-1-phosphate (MTRu-1-P) into 2,3-diketo-5-methylthiopentyl-1-phosphate (DK-MTP-1-P). The chain is Methylthioribulose-1-phosphate dehydratase from Yersinia pseudotuberculosis serotype O:1b (strain IP 31758).